Consider the following 352-residue polypeptide: tRNA pseudouridine synthase D (352 aa).

Asp-81 (nucleophile) is an active-site residue. Positions 157-303 (GVPNYFGGQR…MSHERRILRL (147 aa)) constitute a TRUD domain.

The protein belongs to the pseudouridine synthase TruD family.

It catalyses the reaction uridine(13) in tRNA = pseudouridine(13) in tRNA. In terms of biological role, responsible for synthesis of pseudouridine from uracil-13 in transfer RNAs. This chain is tRNA pseudouridine synthase D, found in Pseudomonas putida (strain W619).